The sequence spans 268 residues: Imidazole glycerol phosphate synthase subunit HisF (268 aa).

Active-site residues include Asp-12 and Asp-131.

The protein belongs to the HisA/HisF family. As to quaternary structure, heterodimer of HisH and HisF.

It is found in the cytoplasm. The enzyme catalyses 5-[(5-phospho-1-deoxy-D-ribulos-1-ylimino)methylamino]-1-(5-phospho-beta-D-ribosyl)imidazole-4-carboxamide + L-glutamine = D-erythro-1-(imidazol-4-yl)glycerol 3-phosphate + 5-amino-1-(5-phospho-beta-D-ribosyl)imidazole-4-carboxamide + L-glutamate + H(+). It participates in amino-acid biosynthesis; L-histidine biosynthesis; L-histidine from 5-phospho-alpha-D-ribose 1-diphosphate: step 5/9. IGPS catalyzes the conversion of PRFAR and glutamine to IGP, AICAR and glutamate. The HisF subunit catalyzes the cyclization activity that produces IGP and AICAR from PRFAR using the ammonia provided by the HisH subunit. The chain is Imidazole glycerol phosphate synthase subunit HisF from Methanoregula boonei (strain DSM 21154 / JCM 14090 / 6A8).